The chain runs to 203 residues: Somatotropin (203 aa).

An N-terminal signal peptide occupies residues 1–17 (MDRVVLMLSVLSLGVSS). Residue Gln18 is modified to Pyrrolidone carboxylic acid. His36 contributes to the Zn(2+) binding site. An intrachain disulfide couples Cys68 to Cys176. A Zn(2+)-binding site is contributed by Glu185. The cysteines at positions 193 and 201 are disulfide-linked.

It belongs to the somatotropin/prolactin family.

The protein resides in the secreted. Growth hormone plays an important role in growth control and is involved in the regulation of several anabolic processes. Implicated as an osmoregulatory substance important for seawater adaptation. This chain is Somatotropin (gh), found in Pagrus major (Red sea bream).